Here is a 237-residue protein sequence, read N- to C-terminus: Proteasome subunit beta 2 (237 aa).

A compositionally biased stretch (polar residues) spans 1 to 14 (MNNWSQGSTPQGSD). Residues 1–42 (MNNWSQGSTPQGSDPSPYAPELGSLPDGSQSDDHGDTVNKTG) constitute a propeptide, removed in mature form; by autocatalysis. The disordered stretch occupies residues 1–45 (MNNWSQGSTPQGSDPSPYAPELGSLPDGSQSDDHGDTVNKTGTTT). Thr-43 functions as the Nucleophile in the catalytic mechanism.

The protein belongs to the peptidase T1B family. In terms of assembly, the 20S proteasome core is composed of 14 alpha and 14 beta subunits that assemble into four stacked heptameric rings, resulting in a barrel-shaped structure. The two inner rings, each composed of seven catalytic beta subunits, are sandwiched by two outer rings, each composed of seven alpha subunits. The catalytic chamber with the active sites is on the inside of the barrel. Has a gated structure, the ends of the cylinder being occluded by the N-termini of the alpha-subunits. Is capped at one or both ends by the proteasome regulatory ATPase, PAN.

Its subcellular location is the cytoplasm. The catalysed reaction is Cleavage of peptide bonds with very broad specificity.. The formation of the proteasomal ATPase PAN-20S proteasome complex, via the docking of the C-termini of PAN into the intersubunit pockets in the alpha-rings, triggers opening of the gate for substrate entry. Interconversion between the open-gate and close-gate conformations leads to a dynamic regulation of the 20S proteasome proteolysis activity. Its function is as follows. Component of the proteasome core, a large protease complex with broad specificity involved in protein degradation. The protein is Proteasome subunit beta 2 of Haloterrigena turkmenica (strain ATCC 51198 / DSM 5511 / JCM 9101 / NCIMB 13204 / VKM B-1734 / 4k) (Halococcus turkmenicus).